The chain runs to 204 residues: Fluoride-specific ion channel FluC 3 (204 aa).

The segment covering 1-16 has biased composition (basic and acidic residues); the sequence is MRADESGPERESREPT. Residues 1–53 form a disordered region; sequence MRADESGPERESREPTHIPGAEPELGGEPTPRGEPGPGFEPGPGGEPAPSRAP. Pro residues predominate over residues 32–46; the sequence is RGEPGPGFEPGPGGE. Transmembrane regions (helical) follow at residues 62 to 82, 96 to 116, 125 to 145, and 158 to 178; these read VLAAVALGGVLGGSARYALGL, FAVNVSGAFLLALLLVYVLEI, PFAAVGFLGSFTTFSTWMVDT, and AFNVFGSLFAGLAATGLGLAI. Residues Gly-133 and Thr-136 each contribute to the Na(+) site.

The protein belongs to the fluoride channel Fluc/FEX (TC 1.A.43) family.

It is found in the cell membrane. The catalysed reaction is fluoride(in) = fluoride(out). Its activity is regulated as follows. Na(+) is not transported, but it plays an essential structural role and its presence is essential for fluoride channel function. Functionally, fluoride-specific ion channel. Important for reducing fluoride concentration in the cell, thus reducing its toxicity. This chain is Fluoride-specific ion channel FluC 3, found in Streptomyces avermitilis (strain ATCC 31267 / DSM 46492 / JCM 5070 / NBRC 14893 / NCIMB 12804 / NRRL 8165 / MA-4680).